Consider the following 632-residue polypeptide: Tetratricopeptide repeat protein 39B (632 aa).

3 TPR repeats span residues 343 to 376, 535 to 568, and 576 to 609; these read SLVLFYHARIELLKGNLEEAQEVFRKCVSVQEEW, CLVKLLKGCCLKNLQRPLQAELCYNHVVESEKLL, and PFTLFELASLYKSQGEIDKAIKFLETARNNYKDY.

The protein belongs to the TTC39 family.

Regulates high density lipoprotein (HDL) cholesterol metabolism by promoting the ubiquitination and degradation of the oxysterols receptors LXR (NR1H2 and NR1H3). The polypeptide is Tetratricopeptide repeat protein 39B (TTC39B) (Macaca fascicularis (Crab-eating macaque)).